The primary structure comprises 351 residues: UDP-3-O-acylglucosamine N-acyltransferase (351 aa).

His-257 serves as the catalytic Proton acceptor.

The protein belongs to the transferase hexapeptide repeat family. LpxD subfamily. In terms of assembly, homotrimer.

It catalyses the reaction a UDP-3-O-[(3R)-3-hydroxyacyl]-alpha-D-glucosamine + a (3R)-hydroxyacyl-[ACP] = a UDP-2-N,3-O-bis[(3R)-3-hydroxyacyl]-alpha-D-glucosamine + holo-[ACP] + H(+). The protein operates within bacterial outer membrane biogenesis; LPS lipid A biosynthesis. In terms of biological role, catalyzes the N-acylation of UDP-3-O-acylglucosamine using 3-hydroxyacyl-ACP as the acyl donor. Is involved in the biosynthesis of lipid A, a phosphorylated glycolipid that anchors the lipopolysaccharide to the outer membrane of the cell. In Methylorubrum populi (strain ATCC BAA-705 / NCIMB 13946 / BJ001) (Methylobacterium populi), this protein is UDP-3-O-acylglucosamine N-acyltransferase.